Reading from the N-terminus, the 319-residue chain is Transmembrane and ubiquitin-like domain-containing protein 2 (319 aa).

A helical membrane pass occupies residues 36 to 56; the sequence is VMVVAGVVVLTLALVLAWLST. Disordered stretches follow at residues 88 to 130 and 146 to 165; these read VNQG…GDME and QAGL…DSTC. Residues 95–111 are compositionally biased toward basic and acidic residues; it reads PTEHPHPSGGSDDKAEE. Positions 173 to 246 constitute a Ubiquitin-like domain; it reads INVRLKFLND…IHCHRSPPGA (74 aa). 2 consecutive transmembrane segments (helical) span residues 264 to 284 and 293 to 313; these read LGVN…GVVW and FFTA…SFLV.

The protein localises to the membrane. The chain is Transmembrane and ubiquitin-like domain-containing protein 2 (Tmub2) from Rattus norvegicus (Rat).